Reading from the N-terminus, the 267-residue chain is Interleukin-1 beta (267 aa).

Residues 1 to 115 (MAPVPELTSE…DTWDDGFVCD (115 aa)) constitute a propeptide that is removed on maturation.

The protein belongs to the IL-1 family. Monomer. In its precursor form, weakly interacts with full-length MEFV; the mature cytokine does not interact at all. Interacts with integrins ITGAV:ITGBV and ITGA5:ITGB1; integrin-binding is required for IL1B signaling. Interacts with cargo receptor TMED10; the interaction is direct and is required for the secretion of IL1B mature form. Interacts with HSP90AB1; the interaction facilitates cargo translocation into the ERGIC. Interacts with HSP90B1; the interaction facilitates cargo translocation into the ERGIC.

It localises to the cytoplasm. It is found in the cytosol. Its subcellular location is the secreted. The protein resides in the lysosome. The protein localises to the extracellular exosome. Its function is as follows. Potent pro-inflammatory cytokine. Initially discovered as the major endogenous pyrogen, induces prostaglandin synthesis, neutrophil influx and activation, T-cell activation and cytokine production, B-cell activation and antibody production, and fibroblast proliferation and collagen production. Promotes Th17 differentiation of T-cells. Synergizes with IL12/interleukin-12 to induce IFNG synthesis from T-helper 1 (Th1) cells. Plays a role in angiogenesis by inducing VEGF production synergistically with TNF and IL6. Involved in transduction of inflammation downstream of pyroptosis: its mature form is specifically released in the extracellular milieu by passing through the gasdermin-D (GSDMD) pore. The polypeptide is Interleukin-1 beta (IL1B) (Felis catus (Cat)).